Here is a 392-residue protein sequence, read N- to C-terminus: Succinate--CoA ligase [ADP-forming] subunit beta (392 aa).

An ATP-grasp domain is found at 9 to 236 (RDLFERHGLP…QAAVDPLEQA (228 aa)). ATP is bound by residues Lys45, 52–54 (GRG), Ala94, and Glu99. Positions 191 and 205 each coordinate Mg(2+). Residues Asn256 and 318–320 (GIT) contribute to the substrate site.

Belongs to the succinate/malate CoA ligase beta subunit family. As to quaternary structure, heterotetramer of two alpha and two beta subunits. Mg(2+) serves as cofactor.

The enzyme catalyses succinate + ATP + CoA = succinyl-CoA + ADP + phosphate. It carries out the reaction GTP + succinate + CoA = succinyl-CoA + GDP + phosphate. The protein operates within carbohydrate metabolism; tricarboxylic acid cycle; succinate from succinyl-CoA (ligase route): step 1/1. Functionally, succinyl-CoA synthetase functions in the citric acid cycle (TCA), coupling the hydrolysis of succinyl-CoA to the synthesis of either ATP or GTP and thus represents the only step of substrate-level phosphorylation in the TCA. The beta subunit provides nucleotide specificity of the enzyme and binds the substrate succinate, while the binding sites for coenzyme A and phosphate are found in the alpha subunit. This chain is Succinate--CoA ligase [ADP-forming] subunit beta, found in Salinispora tropica (strain ATCC BAA-916 / DSM 44818 / JCM 13857 / NBRC 105044 / CNB-440).